Here is a 362-residue protein sequence, read N- to C-terminus: MDHIQLVNSQIDINHIHNLLIDESCGASSVFVGTTRDNFDGKKVISLEYESYEKMALKEMSKICSQLRARWPDLKHIAIYHRLGTVPVKEASVVIATSAPHRAAALESVTFAVEQLKSRVPIWKKEIYENDTIGEWKENMECPWPQYSKASLRTFDFSSCKIKQTIENIPDKLVQIRVNDSDLNKRVKCFLKRKRDEINLHNINDFKQQSSQIPCEETTTFSCARTQSFLVKQQQSSGHLKVRRANNCCGPQVRPNYSLQLNKLMTPQSDCDDLIEYKLGNSRLRNIEAYMCVSPDDDNILNRIKNIEDRILLIESTSPEYKHFVQFGTDSEKTCLKKPKKEVYLTDRINEFLTKIKREIEQ.

Residues 101–102 (HR), Lys117, and 124–126 (KKE) contribute to the substrate site.

The protein belongs to the MoaE family. MOCS2B subfamily. In terms of assembly, heterotetramer; composed of 2 small (Mocs2A) and 2 large (Mocs2B) subunits.

Its subcellular location is the cytoplasm. The enzyme catalyses 2 [molybdopterin-synthase sulfur-carrier protein]-C-terminal-Gly-aminoethanethioate + cyclic pyranopterin phosphate + H2O = molybdopterin + 2 [molybdopterin-synthase sulfur-carrier protein]-C-terminal Gly-Gly + 2 H(+). The protein operates within cofactor biosynthesis; molybdopterin biosynthesis. Catalytic subunit of the molybdopterin synthase complex, a complex that catalyzes the conversion of precursor Z into molybdopterin. Acts by mediating the incorporation of 2 sulfur atoms from thiocarboxylated Mocs2A into precursor Z to generate a dithiolene group. The sequence is that of Molybdopterin synthase catalytic subunit from Drosophila grimshawi (Hawaiian fruit fly).